The following is a 645-amino-acid chain: UvrABC system protein C (645 aa).

Residues 1–20 (MTDLPPHSSHHPADQGEPLV) form a disordered region. The region spanning 40–118 (YSPGVYRMLS…IKRMKPRFNI (79 aa)) is the GIY-YIG domain. The region spanning 228–263 (TELQQRLVAEMEQASQELNYERAASIRDRIRGFASI) is the UVR domain.

This sequence belongs to the UvrC family. As to quaternary structure, interacts with UvrB in an incision complex.

The protein resides in the cytoplasm. In terms of biological role, the UvrABC repair system catalyzes the recognition and processing of DNA lesions. UvrC both incises the 5' and 3' sides of the lesion. The N-terminal half is responsible for the 3' incision and the C-terminal half is responsible for the 5' incision. In Gluconobacter oxydans (strain 621H) (Gluconobacter suboxydans), this protein is UvrABC system protein C.